Consider the following 442-residue polypeptide: Adenylosuccinate synthetase (442 aa).

GTP-binding positions include 25 to 31, 53 to 55, and K62; these read GDEGKGK and GHT. D26 functions as the Proton acceptor in the catalytic mechanism. Residues D26 and G53 each coordinate Mg(2+). Residues 26–29 and 51–54 contribute to the IMP site; these read DEGK and NAGH. H54 acts as the Proton donor in catalysis. IMP contacts are provided by T141, R155, N232, and T247. T307 lines the GTP pocket. A substrate-binding site is contributed by 307–313; sequence TTTKRPR. Residue R311 participates in IMP binding. Residues R313, 339-341, and 425-427 contribute to the GTP site; these read KLD and GVG.

Belongs to the adenylosuccinate synthetase family. In terms of assembly, homodimer. It depends on Mg(2+) as a cofactor.

It localises to the cytoplasm. The catalysed reaction is IMP + L-aspartate + GTP = N(6)-(1,2-dicarboxyethyl)-AMP + GDP + phosphate + 2 H(+). It participates in purine metabolism; AMP biosynthesis via de novo pathway; AMP from IMP: step 1/2. In terms of biological role, plays an important role in the salvage pathway for purine nucleotide biosynthesis. Catalyzes the first committed step in the biosynthesis of AMP from IMP. The protein is Adenylosuccinate synthetase (Adss) of Plasmodium falciparum (isolate 3D7).